The primary structure comprises 355 residues: GTP 3',8-cyclase (355 aa).

Residues 16–242 (RYGRRATDMR…PDPRARDGAP (227 aa)) form the Radical SAM core domain. Residue R25 participates in GTP binding. [4Fe-4S] cluster is bound by residues C32 and C36. Y38 is an S-adenosyl-L-methionine binding site. C39 is a binding site for [4Fe-4S] cluster. GTP is bound at residue R76. G80 lines the S-adenosyl-L-methionine pocket. Position 107 (T107) interacts with GTP. S131 lines the S-adenosyl-L-methionine pocket. K168 serves as a coordination point for GTP. M202 serves as a coordination point for S-adenosyl-L-methionine. 2 residues coordinate [4Fe-4S] cluster: C277 and C280. 282 to 284 (RTR) is a GTP binding site. C294 provides a ligand contact to [4Fe-4S] cluster.

It belongs to the radical SAM superfamily. MoaA family. In terms of assembly, monomer. Requires [4Fe-4S] cluster as cofactor.

It carries out the reaction GTP + AH2 + S-adenosyl-L-methionine = (8S)-3',8-cyclo-7,8-dihydroguanosine 5'-triphosphate + 5'-deoxyadenosine + L-methionine + A + H(+). The protein operates within cofactor biosynthesis; molybdopterin biosynthesis. In terms of biological role, catalyzes, together with MoaC, the conversion of 5'-GTP to cyclic pyranopterin monophosphate (cPMP or molybdopterin precursor Z). Catalyzes the cyclization of GTP to (8S)-3',8-cyclo-7,8-dihydroguanosine 5'-triphosphate. The sequence is that of GTP 3',8-cyclase from Paenarthrobacter nicotinovorans (Arthrobacter nicotinovorans).